Consider the following 197-residue polypeptide: MAKQITSNCNFIFGASDIKSLPNESAPEIAFAGRSNVGKSSLINLLINSKKAARVSSKPGCTRQINFYSMYDDKFRLVDLPGYGYSHAGKEEIIQYLNLIEYYLIQRENLRRVFVLIDSKVGLKEIDKDFIYWLIYNNINFNIVLTKIDKVSQKSLGAVIEDIQKWINNENVSIHQMSIRVKHKITKVRDEFFKFTR.

One can recognise an EngB-type G domain in the interval 25–197 (SAPEIAFAGR…VRDEFFKFTR (173 aa)). Residues 33–40 (GRSNVGKS), 60–64 (GCTRQ), 79–82 (DLPG), 146–149 (TKID), and 177–179 (MSI) contribute to the GTP site. 2 residues coordinate Mg(2+): Ser40 and Thr62.

It belongs to the TRAFAC class TrmE-Era-EngA-EngB-Septin-like GTPase superfamily. EngB GTPase family. It depends on Mg(2+) as a cofactor.

In terms of biological role, necessary for normal cell division and for the maintenance of normal septation. In Wolbachia pipientis wMel, this protein is Probable GTP-binding protein EngB.